A 536-amino-acid polypeptide reads, in one-letter code: MEVIELSLPATNRLATEYIEGTFPVHEAFHPCSFKERLHELHKRTYARDALVHHLLAYHKQFQASEETMANIEKLRHRESVVVIGGQQAGLLTGPLYTIYKIISIITLAKQQEQQLRVPVVPVFWMASEDHDMAEINYVHVAQRGKVKKYVYSPLAKEKRMAAHIELDADALKQWIDDIFKTFGETNVTNELRTYIYECMATSKTVADFFATIVLKLFAKEGIVIVDAAHPHLRAIEREWFMTLAHEHEAITTALQTQQRHLAQLGYEQAIDVSPMCAHLFYDDGQRRLLYYDDAQHCFYTKDGVYRFTPNELRQRIESEPQSFSNNVVTRPLMQEWLFPTLAFIAGPGEIAYWAELKRVFEHFHWHMPPIVPRLSLTLVERHIAADLADVHMTVAEALTNGTKQALEEWMRNNQPVAFDETFHEAKKQMAYIHEQLRQLGMQVDPHLEGIMLKNAERVETQIDYLQQLITRRMLQKHDVHVRKYERIELSLRPNNMPQERVWNVLYYMNRYGLDFVDRLLHVDYRWNGMHKIVYL.

This sequence belongs to the BshC family.

Functionally, involved in bacillithiol (BSH) biosynthesis. May catalyze the last step of the pathway, the addition of cysteine to glucosamine malate (GlcN-Mal) to generate BSH. In Anoxybacillus flavithermus (strain DSM 21510 / WK1), this protein is Putative cysteine ligase BshC.